The following is a 586-amino-acid chain: Cryptochrome-1 (586 aa).

Positions Val3–Leu132 constitute a Photolyase/cryptochrome alpha/beta domain. Residue Lys11 forms a Glycyl lysine isopeptide (Lys-Gly) (interchain with G-Cter in ubiquitin) linkage. An LIR 1 motif is present at residues Asn50 to Phe54. Ser71 carries the phosphoserine; by AMPK modification. The LIR 2 motif lies at Asp82 to Leu87. Residue Lys107 forms a Glycyl lysine isopeptide (Lys-Gly) (interchain with G-Cter in ubiquitin) linkage. Positions Lys151–Leu156 match the LIR 3 motif. Lys159 is covalently cross-linked (Glycyl lysine isopeptide (Lys-Gly) (interchain with G-Cter in ubiquitin)). Ser247 carries the phosphoserine; by MAPK modification. Ser252 is an FAD binding site. 2 consecutive short sequence motifs (LIR) follow at residues Leu255–Leu260 and Asp271–Val276. Residue Ser280 is modified to Phosphoserine; by AMPK. The short motif at Ser285–Leu290 is the LIR 6 element. Gln289 serves as a coordination point for FAD. A Glycyl lysine isopeptide (Lys-Gly) (interchain with G-Cter in ubiquitin) cross-link involves residue Lys329. The LIR 7 signature appears at Thr335 to Trp339. His355 is a binding site for FAD. A required for inhibition of CLOCK-BMAL1-mediated transcription region spans residues Trp371–Met470. Residues Lys379–Leu384 carry the LIR 8 motif. Residue Asp387–Asp389 coordinates FAD. 3 short sequence motifs (LIR) span residues Gly395–Leu400, His411–Val416, and Arg430–Val435. The tract at residues Val471–Arg493 is interaction with TIMELESS. Lys485 participates in a covalent cross-link: Glycyl lysine isopeptide (Lys-Gly) (interchain with G-Cter in ubiquitin). 2 consecutive short sequence motifs (LIR) follow at residues Gln486–Leu491 and Ser492–Leu497. A compositionally biased stretch (polar residues) spans Gln545 to Thr559. Positions Gln545 to Asn586 are disordered. Lys565 is covalently cross-linked (Glycyl lysine isopeptide (Lys-Gly) (interchain with G-Cter in ubiquitin)). Residue Ser568 is modified to Phosphoserine.

This sequence belongs to the DNA photolyase class-1 family. Component of the circadian core oscillator, which includes the CRY proteins, CLOCK or NPAS2, BMAL1 or BMAL2, CSNK1D and/or CSNK1E, TIMELESS, and the PER proteins. Interacts directly with TIMELESS. Interacts directly with PER1, PER2 and PER3; interaction with PER2 inhibits its ubiquitination and vice versa. Interacts with FBXL21. Interacts with FBXL3. Interacts with CLOCK-BMAL1 independently of PER2 and DNA. Interacts with HDAC1, HDAC2 and SIN3B. Interacts with nuclear receptors AR, NR1D1, NR3C1/GR, RORA and RORC; the interaction with at least NR3C1/GR is ligand dependent. Interacts with PRKDC. Interacts with the G protein subunit alpha GNAS; the interaction may block GPCR-mediated regulation of cAMP concentrations. Interacts with PRMT5. Interacts with EZH2. Interacts with MYBBP1A, DOCK7, HNRNPU, RPL7A, RPL8 and RPS3. Interacts with PPP5C (via TPR repeats). Interacts with MAP1LC3B. Interacts with CLOCK. Interacts with BMAL1. Interacts weakly with HDAC3; this interaction is enhanced in the presence of FBXL3. Interacts with TRIM28, KCTD5 and DDB1. Interacts with FOXO1. Interacts with DTL and DDB1-CUL4A complex. Interacts with HNF4A. Interacts with PSMD2 in a KDM8-dependent manner. Interacts with KDM8 in a FBXL3-dependent manner. Interacts with PPARG in a ligand-dependent manner. Interacts with PPARD (via domain NR LBD) and NR1I2 (via domain NR LBD) in a ligand-dependent manner. Interacts with PPARA, NR1I3 and VDR. The cofactor is FAD. It depends on (6R)-5,10-methylene-5,6,7,8-tetrahydrofolate as a cofactor. Phosphorylation on Ser-247 by MAPK is important for the inhibition of CLOCK-BMAL1-mediated transcriptional activity. Phosphorylation by CSNK1E requires interaction with PER1 or PER2. Phosphorylation at Ser-71 and Ser-280 by AMPK decreases protein stability. Phosphorylation at Ser-568 exhibits a robust circadian rhythm with a peak at CT8, increases protein stability, prevents SCF(FBXL3)-mediated degradation and is antagonized by interaction with PRKDC. In terms of processing, ubiquitinated by the SCF(FBXL3) and SCF(FBXL21) complexes, regulating the balance between degradation and stabilization. The SCF(FBXL3) complex is mainly nuclear and mediates ubiquitination and subsequent degradation of CRY1. In contrast, cytoplasmic SCF(FBXL21) complex-mediated ubiquitination leads to stabilize CRY1 and counteract the activity of the SCF(FBXL3) complex. The SCF(FBXL3) and SCF(FBXL21) complexes probably mediate ubiquitination at different Lys residues. Ubiquitination at Lys-11 and Lys-107 are specifically ubiquitinated by the SCF(FBXL21) complex but not by the SCF(FBXL3) complex. Ubiquitination may be inhibited by PER2. Deubiquitinated by USP7. Post-translationally, undergoes autophagy-mediated degradation in the liver in a time-dependent manner. Autophagic degradation of CRY1 (an inhibitor of gluconeogenesis) occurs during periods of reduced feeding allowing induction of gluconeogenesis and maintenance of blood glucose levels.

Its subcellular location is the cytoplasm. It localises to the nucleus. Its function is as follows. Transcriptional repressor which forms a core component of the circadian clock. The circadian clock, an internal time-keeping system, regulates various physiological processes through the generation of approximately 24 hour circadian rhythms in gene expression, which are translated into rhythms in metabolism and behavior. It is derived from the Latin roots 'circa' (about) and 'diem' (day) and acts as an important regulator of a wide array of physiological functions including metabolism, sleep, body temperature, blood pressure, endocrine, immune, cardiovascular, and renal function. Consists of two major components: the central clock, residing in the suprachiasmatic nucleus (SCN) of the brain, and the peripheral clocks that are present in nearly every tissue and organ system. Both the central and peripheral clocks can be reset by environmental cues, also known as Zeitgebers (German for 'timegivers'). The predominant Zeitgeber for the central clock is light, which is sensed by retina and signals directly to the SCN. The central clock entrains the peripheral clocks through neuronal and hormonal signals, body temperature and feeding-related cues, aligning all clocks with the external light/dark cycle. Circadian rhythms allow an organism to achieve temporal homeostasis with its environment at the molecular level by regulating gene expression to create a peak of protein expression once every 24 hours to control when a particular physiological process is most active with respect to the solar day. Transcription and translation of core clock components (CLOCK, NPAS2, BMAL1, BMAL2, PER1, PER2, PER3, CRY1 and CRY2) plays a critical role in rhythm generation, whereas delays imposed by post-translational modifications (PTMs) are important for determining the period (tau) of the rhythms (tau refers to the period of a rhythm and is the length, in time, of one complete cycle). A diurnal rhythm is synchronized with the day/night cycle, while the ultradian and infradian rhythms have a period shorter and longer than 24 hours, respectively. Disruptions in the circadian rhythms contribute to the pathology of cardiovascular diseases, cancer, metabolic syndromes and aging. A transcription/translation feedback loop (TTFL) forms the core of the molecular circadian clock mechanism. Transcription factors, CLOCK or NPAS2 and BMAL1 or BMAL2, form the positive limb of the feedback loop, act in the form of a heterodimer and activate the transcription of core clock genes and clock-controlled genes (involved in key metabolic processes), harboring E-box elements (5'-CACGTG-3') within their promoters. The core clock genes: PER1/2/3 and CRY1/2 which are transcriptional repressors form the negative limb of the feedback loop and interact with the CLOCK|NPAS2-BMAL1|BMAL2 heterodimer inhibiting its activity and thereby negatively regulating their own expression. This heterodimer also activates nuclear receptors NR1D1/2 and RORA/B/G, which form a second feedback loop and which activate and repress BMAL1 transcription, respectively. CRY1 and CRY2 have redundant functions but also differential and selective contributions at least in defining the pace of the SCN circadian clock and its circadian transcriptional outputs. More potent transcriptional repressor in cerebellum and liver than CRY2, though more effective in lengthening the period of the SCN oscillator. On its side, CRY2 seems to play a critical role in tuning SCN circadian period by opposing the action of CRY1. With CRY2, is dispensable for circadian rhythm generation but necessary for the development of intercellular networks for rhythm synchrony. Capable of translocating circadian clock core proteins such as PER proteins to the nucleus. Interacts with CLOCK-BMAL1 independently of PER proteins and is found at CLOCK-BMAL1-bound sites, suggesting that CRY may act as a molecular gatekeeper to maintainCLOCK-BMAL1 in a poised and repressed state until the proper time for transcriptional activation. Represses the CLOCK-BMAL1 induced transcription of BHLHE40/DEC1, ATF4, MTA1, KLF10 and NAMPT. May repress circadian target genes expression in collaboration with HDAC1 and HDAC2 through histone deacetylation. Mediates the clock-control activation of ATR and modulates ATR-mediated DNA damage checkpoint. In liver, mediates circadian regulation of cAMP signaling and gluconeogenesis by binding to membrane-coupled G proteins and blocking glucagon-mediated increases in intracellular cAMP concentrations and CREB1 phosphorylation. Inhibits hepatic gluconeogenesis by decreasing nuclear FOXO1 levels that down-regulates gluconeogenic gene expression. Besides its role in the maintenance of the circadian clock, is also involved in the regulation of other processes. Represses glucocorticoid receptor NR3C1/GR-induced transcriptional activity by binding to glucocorticoid response elements (GREs). Plays a key role in glucose and lipid metabolism modulation, in part, through the transcriptional regulation of genes involved in these pathways, such as LEP or ACSL4. Represses PPARD and its target genes in the skeletal muscle and limits exercise capacity. Plays an essential role in the generation of circadian rhythms in the retina. Represses the transcriptional activity of NR1I2. The polypeptide is Cryptochrome-1 (CRY1) (Macaca fascicularis (Crab-eating macaque)).